A 564-amino-acid polypeptide reads, in one-letter code: Probable diguanylate cyclase DgcQ (564 aa).

Helical transmembrane passes span 20–40 and 360–380; these read LGPG…STLL and IALT…WYVI. Residues 428–563 form the GGDEF domain; the sequence is HPFSVIQVDL…GRNRVFASDN (136 aa). Position 436 (Asp436) interacts with Mg(2+). Residues Asn444, His449, and Asp453 each contribute to the substrate site. Mg(2+) is bound at residue Glu479. Catalysis depends on Glu479, which acts as the Proton acceptor.

Homodimer. Mg(2+) serves as cofactor.

It localises to the cell inner membrane. It catalyses the reaction 2 GTP = 3',3'-c-di-GMP + 2 diphosphate. It participates in glycan metabolism; bacterial cellulose biosynthesis. The protein operates within purine metabolism; 3',5'-cyclic di-GMP biosynthesis. Catalyzes the synthesis of cyclic-di-GMP (c-di-GMP) via the condensation of 2 GTP molecules. Cyclic-di-GMP is a second messenger which controls cell surface-associated traits in bacteria. Involved in the regulation of cellulose production. This Shigella dysenteriae serotype 1 (strain Sd197) protein is Probable diguanylate cyclase DgcQ.